Consider the following 257-residue polypeptide: Deoxyribose-phosphate aldolase (257 aa).

Asp-102 (proton donor/acceptor) is an active-site residue. Lys-166 serves as the catalytic Schiff-base intermediate with acetaldehyde. The active-site Proton donor/acceptor is the Lys-198.

It belongs to the DeoC/FbaB aldolase family. DeoC type 2 subfamily.

It localises to the cytoplasm. The enzyme catalyses 2-deoxy-D-ribose 5-phosphate = D-glyceraldehyde 3-phosphate + acetaldehyde. It participates in carbohydrate degradation; 2-deoxy-D-ribose 1-phosphate degradation; D-glyceraldehyde 3-phosphate and acetaldehyde from 2-deoxy-alpha-D-ribose 1-phosphate: step 2/2. Functionally, catalyzes a reversible aldol reaction between acetaldehyde and D-glyceraldehyde 3-phosphate to generate 2-deoxy-D-ribose 5-phosphate. This chain is Deoxyribose-phosphate aldolase, found in Shewanella halifaxensis (strain HAW-EB4).